The sequence spans 189 residues: ATP synthase subunit delta (189 aa).

The protein belongs to the ATPase delta chain family. F-type ATPases have 2 components, F(1) - the catalytic core - and F(0) - the membrane proton channel. F(1) has five subunits: alpha(3), beta(3), gamma(1), delta(1), epsilon(1). F(0) has three main subunits: a(1), b(2) and c(10-14). The alpha and beta chains form an alternating ring which encloses part of the gamma chain. F(1) is attached to F(0) by a central stalk formed by the gamma and epsilon chains, while a peripheral stalk is formed by the delta and b chains.

Its subcellular location is the cell inner membrane. In terms of biological role, f(1)F(0) ATP synthase produces ATP from ADP in the presence of a proton or sodium gradient. F-type ATPases consist of two structural domains, F(1) containing the extramembraneous catalytic core and F(0) containing the membrane proton channel, linked together by a central stalk and a peripheral stalk. During catalysis, ATP synthesis in the catalytic domain of F(1) is coupled via a rotary mechanism of the central stalk subunits to proton translocation. Its function is as follows. This protein is part of the stalk that links CF(0) to CF(1). It either transmits conformational changes from CF(0) to CF(1) or is implicated in proton conduction. The polypeptide is ATP synthase subunit delta (Rickettsia bellii (strain OSU 85-389)).